The primary structure comprises 562 residues: Dihydroxy-acid dehydratase (562 aa).

Asp80 serves as a coordination point for Mg(2+). Cys121 contributes to the [2Fe-2S] cluster binding site. Asp122 and Lys123 together coordinate Mg(2+). Lys123 is subject to N6-carboxylysine. Cys194 is a [2Fe-2S] cluster binding site. Residue Glu446 coordinates Mg(2+). The active-site Proton acceptor is the Ser472.

Belongs to the IlvD/Edd family. In terms of assembly, homodimer. Requires [2Fe-2S] cluster as cofactor. It depends on Mg(2+) as a cofactor.

The enzyme catalyses (2R)-2,3-dihydroxy-3-methylbutanoate = 3-methyl-2-oxobutanoate + H2O. It catalyses the reaction (2R,3R)-2,3-dihydroxy-3-methylpentanoate = (S)-3-methyl-2-oxopentanoate + H2O. It functions in the pathway amino-acid biosynthesis; L-isoleucine biosynthesis; L-isoleucine from 2-oxobutanoate: step 3/4. It participates in amino-acid biosynthesis; L-valine biosynthesis; L-valine from pyruvate: step 3/4. Its function is as follows. Functions in the biosynthesis of branched-chain amino acids. Catalyzes the dehydration of (2R,3R)-2,3-dihydroxy-3-methylpentanoate (2,3-dihydroxy-3-methylvalerate) into 2-oxo-3-methylpentanoate (2-oxo-3-methylvalerate) and of (2R)-2,3-dihydroxy-3-methylbutanoate (2,3-dihydroxyisovalerate) into 2-oxo-3-methylbutanoate (2-oxoisovalerate), the penultimate precursor to L-isoleucine and L-valine, respectively. The sequence is that of Dihydroxy-acid dehydratase from Staphylococcus epidermidis (strain ATCC 35984 / DSM 28319 / BCRC 17069 / CCUG 31568 / BM 3577 / RP62A).